Reading from the N-terminus, the 312-residue chain is Protein-methionine-sulfoxide reductase catalytic subunit MsrP (312 aa).

The segment at residues 1–42 (MALFRYPRPLPSEITPRDMYLSRRSLIGGAAALGAVSATADA) is a signal peptide (tat-type signal). Mo-molybdopterin is bound by residues asparagine 68, 71-72 (YE), cysteine 126, serine 161, asparagine 211, arginine 216, and 227-229 (GIK).

This sequence belongs to the MsrP family. As to quaternary structure, heterodimer of a catalytic subunit (MsrP) and a heme-binding subunit (MsrQ). It depends on Mo-molybdopterin as a cofactor. Predicted to be exported by the Tat system. The position of the signal peptide cleavage has not been experimentally proven.

It localises to the periplasm. The enzyme catalyses L-methionyl-[protein] + a quinone + H2O = L-methionyl-(S)-S-oxide-[protein] + a quinol. It carries out the reaction L-methionyl-[protein] + a quinone + H2O = L-methionyl-(R)-S-oxide-[protein] + a quinol. Its function is as follows. Part of the MsrPQ system that repairs oxidized periplasmic proteins containing methionine sulfoxide residues (Met-O), using respiratory chain electrons. Thus protects these proteins from oxidative-stress damage caused by reactive species of oxygen and chlorine generated by the host defense mechanisms. MsrPQ is essential for the maintenance of envelope integrity under bleach stress, rescuing a wide series of structurally unrelated periplasmic proteins from methionine oxidation. The catalytic subunit MsrP is non-stereospecific, being able to reduce both (R-) and (S-) diastereoisomers of methionine sulfoxide. In Gluconobacter oxydans (strain 621H) (Gluconobacter suboxydans), this protein is Protein-methionine-sulfoxide reductase catalytic subunit MsrP.